A 328-amino-acid polypeptide reads, in one-letter code: D-alanine--D-alanine ligase (328 aa).

One can recognise an ATP-grasp domain in the interval 118-317; it reads LSVLTKFNIP…MPQMLDNEIT (200 aa). 146-201 is a binding site for ATP; that stretch reads KKALGLPFFVKPNQSGSSLGVSKVDALDQLEKALEFAFAEDNEILIESYLNGTEVS. Asp272, Glu284, and Asn286 together coordinate Mg(2+).

The protein belongs to the D-alanine--D-alanine ligase family. It depends on Mg(2+) as a cofactor. Mn(2+) serves as cofactor.

It localises to the cytoplasm. The enzyme catalyses 2 D-alanine + ATP = D-alanyl-D-alanine + ADP + phosphate + H(+). It participates in cell wall biogenesis; peptidoglycan biosynthesis. Functionally, cell wall formation. This chain is D-alanine--D-alanine ligase, found in Flavobacterium psychrophilum (strain ATCC 49511 / DSM 21280 / CIP 103535 / JIP02/86).